We begin with the raw amino-acid sequence, 63 residues long: Prokaryotic ubiquitin-like protein UBact (63 aa).

The tract at residues 1–63 is disordered; the sequence is MSGRSTFGRF…SRRYRQRTGE (63 aa). Basic and acidic residues predominate over residues 17–50; sequence PWERKPGDDEGGPKRPKVERPDTNDLLKRMRRVD. Glu63 is covalently cross-linked (Isoglutamyl lysine isopeptide (Glu-Lys) (interchain with K-? in acceptor proteins)).

Belongs to the ubiquitin-like protein UBact family.

Functionally, may function as a protein modifier covalently attached to lysine residues of substrate proteins. This may serve to target the modified proteins for degradation by proteasomes. This is Prokaryotic ubiquitin-like protein UBact from Handelsmanbacteria sp. (strain RIFCSPLOWO2_12_FULL_64_10).